Reading from the N-terminus, the 135-residue chain is Large ribosomal subunit protein uL22c (135 aa).

This sequence belongs to the universal ribosomal protein uL22 family. As to quaternary structure, part of the 50S ribosomal subunit.

Its subcellular location is the plastid. This protein binds specifically to 23S rRNA. Its function is as follows. The globular domain of the protein is located near the polypeptide exit tunnel on the outside of the subunit, while an extended beta-hairpin is found that lines the wall of the exit tunnel in the center of the 70S ribosome. In Cuscuta reflexa (Southern Asian dodder), this protein is Large ribosomal subunit protein uL22c (rpl22).